A 146-amino-acid chain; its full sequence is Hemoglobin subunit beta-A/B (146 aa).

G1 is subject to N-acetylserine; in variant beta-B. A Globin domain is found at 2-146 (FLTAEEKGLV…VANALAHKYH (145 aa)). The residue at position 44 (S44) is a Phosphoserine. At K59 the chain carries N6-acetyllysine. Position 63 (H63) interacts with heme b. K82 is modified (N6-acetyllysine). H92 is a heme b binding site. Position 93 is an S-nitrosocysteine (C93). An N6-acetyllysine modification is found at K144.

It belongs to the globin family. In terms of assembly, heterotetramer of two alpha chains and two beta chains. As to expression, red blood cells.

Its function is as follows. Involved in oxygen transport from the lung to the various peripheral tissues. This chain is Hemoglobin subunit beta-A/B (HBB), found in Felis catus (Cat).